The chain runs to 242 residues: Glutamine transport ATP-binding protein GlnQ (242 aa).

One can recognise an ABC transporter domain in the interval I2–L236. Residue G34–S41 coordinates ATP.

This sequence belongs to the ABC transporter superfamily. As to quaternary structure, the complex is composed of two ATP-binding proteins (GlnQ), two transmembrane proteins (GlnM and GlnP) and a solute-binding protein (GlnH).

It localises to the cell membrane. In terms of biological role, part of the ABC transporter complex GlnHMPQ involved in glutamine transport. Probably responsible for energy coupling to the transport system. The sequence is that of Glutamine transport ATP-binding protein GlnQ (glnQ) from Bacillus subtilis (strain 168).